A 348-amino-acid chain; its full sequence is tRNA pseudouridine synthase D (348 aa).

Position 27 (Phe27) interacts with substrate. Residue Asp80 is the Nucleophile of the active site. Residue Asn129 participates in substrate binding. Residues 155-303 form the TRUD domain; it reads GVPNYFGSQR…VEPARRAVLL (149 aa). Phe329 is a binding site for substrate.

It belongs to the pseudouridine synthase TruD family.

The enzyme catalyses uridine(13) in tRNA = pseudouridine(13) in tRNA. Its function is as follows. Responsible for synthesis of pseudouridine from uracil-13 in transfer RNAs. The protein is tRNA pseudouridine synthase D of Pectobacterium atrosepticum (strain SCRI 1043 / ATCC BAA-672) (Erwinia carotovora subsp. atroseptica).